Consider the following 669-residue polypeptide: Dymeclin (669 aa).

The N-myristoyl glycine moiety is linked to residue Gly-2.

Belongs to the dymeclin family. Post-translationally, myristoylated in vitro; myristoylation is not essential for protein targeting to Golgi compartment.

The protein resides in the cytoplasm. It is found in the golgi apparatus. Functionally, necessary for correct organization of Golgi apparatus. This Xenopus laevis (African clawed frog) protein is Dymeclin (dym).